Consider the following 818-residue polypeptide: FAD-dependent monooxygenase anuJ (818 aa).

The FAD site is built by Glu-46, Ala-60, Arg-122, Asp-329, and Gly-342. Transmembrane regions (helical) follow at residues Val-471–Val-491, Phe-539–Val-559, and Leu-571–Ile-591. Residue Asn-614 is glycosylated (N-linked (GlcNAc...) asparagine). 2 consecutive transmembrane segments (helical) span residues Ile-621–Val-641 and Ala-647–Ala-667. Asn-683 carries an N-linked (GlcNAc...) asparagine glycan. A run of 2 helical transmembrane segments spans residues Trp-743–Leu-763 and Phe-778–Leu-798.

The protein belongs to the paxM FAD-dependent monooxygenase family.

The protein localises to the membrane. Functionally, highly reducing polyketide synthase; part of the gene cluster that mediates the biosynthesis of annullatin D, an alkylated aromatic polyketide with a fused dihydrobenzofuran lactone ring system that exhibits potent agonistic activities toward the cannabinoid receptors. AnuJ does not seem to play a role within the pathway. The annullatin backbone 2-hydroxymethyl-3-pentylphenol is assembled from one acetyl-CoA starter unit and 5 malonyl-CoA elongation units by cooperation of the highly reducing polyketide synthase anuA, the short-chain dehydrogenase anuB and the oxidoreductase anuC, before being hydroxylated at the C-5 alkyl chain by the cytochrome P450 monooxygenase anuE to form (8S)-annullatin E. The prenyltransferase anuH subsequently installs one isoprenyl group at the benzene ring to form (8S)-annullatin J. Enzymatic or nonenzymatic dihydro-benzofuran ring formation between the prenyl and the phenolic hydroxyl groups in (8S)-annullatin J results in two diastereomers (2S,9S)-annullatin H and compound 12. The intermediate (2S,9S)-annullatin H is then converted to (2S,9S)-annullatin D by the FAD-linked oxidoreductase anuG-catalyzed five-member lactone ring formation. The isomer 12 acts as a substrate for the short-chain dehydrogenase anuF and is oxidized to (2R)-annullatin F, which is subsequently acetylated by an acetyltransferase leading to (2R)-annullatin G formation. The remaining enzymes identified within the cluster, anuD, anuI and anuJ, seem not to be involved in annullatin biosynthesis. The sequence is that of FAD-dependent monooxygenase anuJ from Penicillium roqueforti (strain FM164).